We begin with the raw amino-acid sequence, 467 residues long: Neuromedin-K receptor (467 aa).

Residues 1–86 (MDSFAAAETW…TNQFVQPSWR (86 aa)) are Extracellular-facing. N-linked (GlcNAc...) asparagine glycosylation is found at N23, N50, and N75. The helical transmembrane segment at 87-109 (IALWSLAYGVVVAVAVFGNLIVI) threads the bilayer. Residues 110–119 (WIILAHKRMR) lie on the Cytoplasmic side of the membrane. A helical membrane pass occupies residues 120–141 (TVTNYFLVNLAFSDASMAAFNT). The Extracellular portion of the chain corresponds to 142-161 (LVNFIYALHSEWYFGANYCR). A disulfide bond links C160 and C235. Residues 162 to 183 (FQNFFPITAVFASIYSMTAIAV) traverse the membrane as a helical segment. Residues 184-203 (DRYMAIIDPLKPRLSATATK) lie on the Cytoplasmic side of the membrane. The chain crosses the membrane as a helical span at residues 204-224 (IVIGSIWILAFLLALPQCLYS). Residues 225-247 (KTKVMPGRTLCYVQWPEGPKQHF) are Extracellular-facing. Residues 248–272 (IYHIIVIILVYCFPLLIMGITYTIV) traverse the membrane as a helical segment. Topologically, residues 273 to 301 (GITLWGGEIPGDTCDKYHEQLKAKRKVVK) are cytoplasmic. The helical transmembrane segment at 302 to 323 (MMIIVVVTFAICWLPYHIYFIL) threads the bilayer. Residues 324-336 (TAIYQQLNRWKYI) lie on the Extracellular side of the membrane. The chain crosses the membrane as a helical span at residues 337 to 361 (QQVYLASFWLAMSSTMYNPIIYCCL). Topologically, residues 362-467 (NKRFRAGFKR…SPYTSMEEYS (106 aa)) are cytoplasmic. C376 carries the S-palmitoyl cysteine lipid modification. The disordered stretch occupies residues 416–467 (DPSDADNTRSSRKKRATPGDPNFNGCSRRNSKSASTTSSFISSPYTSMEEYS). Residues 447-467 (KSASTTSSFISSPYTSMEEYS) show a composition bias toward low complexity.

The protein belongs to the G-protein coupled receptor 1 family.

Its subcellular location is the cell membrane. This is a receptor for the tachykinin neuropeptide neuromedin-K (neurokinin B). It is associated with G proteins that activate a phosphatidylinositol-calcium second messenger system. This Oryctolagus cuniculus (Rabbit) protein is Neuromedin-K receptor (TACR3).